The sequence spans 614 residues: Dolichyl-diphosphooligosaccharide--protein glycosyltransferase subunit 1A (614 aa).

The first 25 residues, 1–25, serve as a signal peptide directing secretion; that stretch reads MKQSSVVDLLLLLLAIALLATPAFS. Residues 26 to 432 lie on the Lumenal side of the membrane; the sequence is DLVLSKVERR…QVYYKFSNIN (407 aa). N-linked (GlcNAc...) asparagine glycans are attached at residues Asn-94 and Asn-299. Lys-311 is covalently cross-linked (Glycyl lysine isopeptide (Lys-Gly) (interchain with G-Cter in ubiquitin)). An N-linked (GlcNAc...) asparagine glycan is attached at Asn-352. The helical transmembrane segment at 433–453 threads the bilayer; sequence LLSEPLMLISGFFILFITCII. Residues 454–614 lie on the Cytoplasmic side of the membrane; it reads YTRADISISK…EDLLEFIDEI (161 aa).

It belongs to the OST1 family. In terms of assembly, component of the oligosaccharyltransferase (OST) complex.

Its subcellular location is the endoplasmic reticulum membrane. It participates in protein modification; protein glycosylation. In terms of biological role, subunit of the oligosaccharyl transferase (OST) complex that catalyzes the initial transfer of a defined glycan (Glc(3)Man(9)GlcNAc(2) in eukaryotes) from the lipid carrier dolichol-pyrophosphate to an asparagine residue within an Asn-X-Ser/Thr consensus motif in nascent polypeptide chains, the first step in protein N-glycosylation. N-glycosylation occurs cotranslationally and the complex associates with the Sec61 complex at the channel-forming translocon complex that mediates protein translocation across the endoplasmic reticulum (ER). All subunits are required for a maximal enzyme activity. The protein is Dolichyl-diphosphooligosaccharide--protein glycosyltransferase subunit 1A (OST1A) of Arabidopsis thaliana (Mouse-ear cress).